Consider the following 148-residue polypeptide: Large ribosomal subunit protein uL15 (148 aa).

Residues 1 to 51 (MNLSNLKPAEGSTKTRKRIGRGPGSGLGGTSTRGHKGAKSRSGYKNKIGFE) are disordered. Positions 21 to 31 (RGPGSGLGGTS) are enriched in gly residues. Residues 33 to 44 (RGHKGAKSRSGY) are compositionally biased toward basic residues.

This sequence belongs to the universal ribosomal protein uL15 family. In terms of assembly, part of the 50S ribosomal subunit.

Its function is as follows. Binds to the 23S rRNA. The protein is Large ribosomal subunit protein uL15 of Parabacteroides distasonis (strain ATCC 8503 / DSM 20701 / CIP 104284 / JCM 5825 / NCTC 11152).